Reading from the N-terminus, the 132-residue chain is D-ribose pyranase (132 aa).

Histidine 20 functions as the Proton donor in the catalytic mechanism. Residues aspartate 28, histidine 99, and 121-123 each bind substrate; that span reads YAN.

The protein belongs to the RbsD / FucU family. RbsD subfamily. In terms of assembly, homodecamer.

The protein localises to the cytoplasm. The catalysed reaction is beta-D-ribopyranose = beta-D-ribofuranose. Its pathway is carbohydrate metabolism; D-ribose degradation; D-ribose 5-phosphate from beta-D-ribopyranose: step 1/2. In terms of biological role, catalyzes the interconversion of beta-pyran and beta-furan forms of D-ribose. This chain is D-ribose pyranase, found in Variovorax paradoxus (strain S110).